The sequence spans 709 residues: Protein white (709 aa).

Residues 1 to 35 are disordered; sequence MTINTDDQYADGESKTTISSNRRYSTSSFQDQSME. Over residues 15 to 32 the composition is skewed to polar residues; it reads KTTISSNRRYSTSSFQDQ. The ABC transporter domain occupies 103-348; it reads FTRQRLVKDF…SQLGIPCPPN (246 aa). ATP contacts are provided by residues 136–143 and 292–299; these read GSSGAGKT and GMAMKGKT. A helical membrane pass occupies residues 457-475; the sequence is LLQTAMVASLIGSIYFGQV. Asparagine 485 carries an N-linked (GlcNAc...) asparagine glycan. The next 4 membrane-spanning stretches (helical) occupy residues 487–507, 537–555, 564–585, and 598–616; these read SLFL…INVF, LPLF…YPMI, YLTT…GYLI, and VGPP…FLNS. A glycan (N-linked (GlcNAc...) asparagine) is linked at asparagine 658. The chain crosses the membrane as a helical span at residues 681-700; that stretch reads LDIGCLFALIVLFRLGALFC.

Belongs to the ABC transporter superfamily. ABCG family. Eye pigment precursor importer (TC 3.A.1.204) subfamily.

It localises to the membrane. In terms of biological role, may be part of a membrane-spanning permease system necessary for the transport of pigment precursors into pigment cells responsible for eye color. This Anopheles albimanus (New world malaria mosquito) protein is Protein white (W).